Here is a 1001-residue protein sequence, read N- to C-terminus: 26S proteasome non-ATPase regulatory subunit 1 homolog B (1001 aa).

Position 2 is an N-acetylalanine (Ala2). Lys166 participates in a covalent cross-link: Glycyl lysine isopeptide (Lys-Gly) (interchain with G-Cter in ubiquitin). PC repeat units lie at residues 412–447, 452–485, 487–521, 522–555, 557–590, 591–626, 627–659, 661–695, 696–736, and 739–771; these read SATAGLGVIHRGHLQQGRSLMAPYLPQGGAGGGGSP, GALYALGLIHANHGEGIKQFLRDSLRSTSVEVIQ, GACLGLGLAALGTADEDIYDDIKSVLYTDSAVAGE, AAGISMGLLLVGTATDKASEMLAYAHETQHEKII, GLALGIALTVYGREEGADTLIEQMTRDQDPIIRY, GGMYALALAYSGTANNKAIRQLLHFAVSDVSDDVRR, TAVLALGFVLYSDPEQTPRIVSLLSESYNPHVR, GAALAVGISCAGTGLSEAISLLEPLTSDVVDFVRQ, GALI…DTMS, and GAILASGILDAGGRNVTIRLLSKTKHDKVTAVI. Disordered regions lie at residues 853-896 and 954-1001; these read AKKE…TVEK and SLTD…YASP. Residues 854–863 are compositionally biased toward basic and acidic residues; the sequence is KKEAEQKAKA. Ser889 is subject to Phosphoserine. Low complexity predominate over residues 961 to 985; the sequence is STASPAVGAEAAGQAQQAATTSAMA.

It belongs to the proteasome subunit S1 family. In terms of assembly, component of the 19S regulatory particle (RP/PA700) base subcomplex of the 26S proteasome. The 26S proteasome is composed of a core protease (CP), known as the 20S proteasome, capped at one or both ends by the 19S regulatory particle (RP/PA700). The RP/PA700 complex is composed of at least 17 different subunits in two subcomplexes, the base and the lid, which form the portions proximal and distal to the 20S proteolytic core, respectively.

Acts as a regulatory subunit of the 26 proteasome which is involved in the ATP-dependent degradation of ubiquitinated proteins. The sequence is that of 26S proteasome non-ATPase regulatory subunit 1 homolog B (RPN2B) from Arabidopsis thaliana (Mouse-ear cress).